Here is a 172-residue protein sequence, read N- to C-terminus: Centrin-1 (172 aa).

The segment at 1-30 (MASSYRKPTVASTSQKRKVGPKPELTEEQK) is disordered. EF-hand domains are found at residues 28–63 (EQKQEVREAFDLFDADGSGTIDVKELKVAMRALGFE), 64–99 (PRKEEMKRMIADVDKEGTGKISFNDFLAVMTQKMAE), 101–136 (DTKEEILKAFRLFDDDETGKISFKNLKRVAKELGEN), and 137–172 (LTDEELQEMIDEADRDGDGEVNEDEFLRIMKKTNLY). 5 residues coordinate Ca(2+): Asp-41, Asp-43, Ser-45, Thr-47, and Glu-52. Residues Asp-150, Asp-152, Asp-154, Glu-156, and Glu-161 each coordinate Ca(2+).

Belongs to the centrin family. Monomer. Interacts with CIMAP3. Interacts with USP49.

The protein localises to the cytoplasm. The protein resides in the cytoskeleton. It localises to the microtubule organizing center. Its subcellular location is the centrosome. Its function is as follows. Plays a fundamental role in microtubule-organizing center structure and function. Plays a role in sperm cilia formation. The protein is Centrin-1 (CETN1) of Bos taurus (Bovine).